We begin with the raw amino-acid sequence, 446 residues long: Glutamyl-tRNA reductase 2 (446 aa).

Substrate is bound by residues 53–56 (TCNR), S105, 110–112 (EQQ), and Q116. C54 serves as the catalytic Nucleophile. 185–190 (GAGKMG) lines the NADP(+) pocket. The interval 409–446 (AAELFGIENETAGGERREGGAEGAAAAPGAGPVRSQGT) is disordered. The span at 431 to 440 (GAAAAPGAGP) shows a compositional bias: low complexity.

This sequence belongs to the glutamyl-tRNA reductase family. In terms of assembly, homodimer.

It carries out the reaction (S)-4-amino-5-oxopentanoate + tRNA(Glu) + NADP(+) = L-glutamyl-tRNA(Glu) + NADPH + H(+). Its pathway is porphyrin-containing compound metabolism; protoporphyrin-IX biosynthesis; 5-aminolevulinate from L-glutamyl-tRNA(Glu): step 1/2. Functionally, catalyzes the NADPH-dependent reduction of glutamyl-tRNA(Glu) to glutamate 1-semialdehyde (GSA). The protein is Glutamyl-tRNA reductase 2 of Anaeromyxobacter dehalogenans (strain 2CP-C).